The primary structure comprises 432 residues: Glutamate-1-semialdehyde 2,1-aminomutase 2 (432 aa).

An N6-(pyridoxal phosphate)lysine modification is found at K268.

This sequence belongs to the class-III pyridoxal-phosphate-dependent aminotransferase family. HemL subfamily. As to quaternary structure, homodimer. It depends on pyridoxal 5'-phosphate as a cofactor.

It localises to the cytoplasm. It catalyses the reaction (S)-4-amino-5-oxopentanoate = 5-aminolevulinate. Its pathway is porphyrin-containing compound metabolism; protoporphyrin-IX biosynthesis; 5-aminolevulinate from L-glutamyl-tRNA(Glu): step 2/2. The polypeptide is Glutamate-1-semialdehyde 2,1-aminomutase 2 (Listeria monocytogenes serotype 4b (strain F2365)).